The chain runs to 590 residues: Leishmanolysin (590 aa).

An N-terminal signal peptide occupies residues 1 to 39; the sequence is MSVDSSSTHRHRSVAARLVRLAAAGAAVIAAVGTAAAWA. Positions 40–87 are cleaved as a propeptide — activation peptide; it reads HAGAVQHRCIHDAMQARVRQSVARHHTAPGAVSAVGLSYVTLGAAPTV. 2 disulfides stabilise this stretch: Cys-112–Cys-129 and Cys-178–Cys-217. His-251 serves as a coordination point for Zn(2+). Glu-252 is an active-site residue. Residue His-255 coordinates Zn(2+). Asn-287 carries N-linked (GlcNAc...) asparagine glycosylation. Disulfide bonds link Cys-301-Cys-373, Cys-380-Cys-443, Cys-393-Cys-412, Cys-402-Cys-477, Cys-454-Cys-498, Cys-503-Cys-553, and Cys-523-Cys-546. His-321 provides a ligand contact to Zn(2+). Asn-565 carries the GPI-anchor amidated asparagine lipid modification. A propeptide spans 566–590 (removed in mature form); sequence AAAGRRGPRAAATALLVAALLAVAL.

The protein belongs to the peptidase M8 family. Requires Zn(2+) as cofactor.

Its subcellular location is the cell membrane. The enzyme catalyses Preference for hydrophobic residues at P1 and P1' and basic residues at P2' and P3'. A model nonapeptide is cleaved at -Ala-Tyr-|-Leu-Lys-Lys-.. Its function is as follows. Has an integral role during the infection of macrophages in the mammalian host. The protein is Leishmanolysin (gp63) of Leishmania donovani.